A 310-amino-acid chain; its full sequence is D-apiose import binding protein (310 aa).

The first 21 residues, 1–21 (MKLLKASLVALSLAASTFVYA), serve as a signal peptide directing secretion. Residues Asn-35, 111-112 (DR), 158-160 (DTN), Arg-164, Asn-214, Asp-239, and Gln-260 each bind D-apiofuranose.

This sequence belongs to the bacterial solute-binding protein 2 family.

Its subcellular location is the periplasm. Functionally, part of an ABC transporter complex involved in D-apiose import. Binds D-apiose, D-ribose and D-ribulose. The polypeptide is D-apiose import binding protein (Actinobacillus succinogenes (strain ATCC 55618 / DSM 22257 / CCUG 43843 / 130Z)).